Reading from the N-terminus, the 477-residue chain is Bile acid transporter (477 aa).

15 consecutive transmembrane segments (helical) span residues 13-33 (FVPFAIAALLVSLIGGFTAVL), 50-70 (WISLALAMSSAACAPILGKLG), 83-103 (IVIFAAGNVLTAVATSLIFML), 107-127 (FIVGIGTAAISPIVMAYIVTE), 139-159 (LYMLISSGAVVVGPTCGGLIM), 166-186 (VMMWVCVALCVVVFLICTFSI), 206-226 (LVVVFFSLFLCIPSFGQNIGW), 228-248 (STAFIAAAAVALVALFILVMV), 272-292 (LILFLTQGLMMANMTNVIVFV), 301-321 (IISSFAISIMYIGMSLGSVII), 333-353 (VLTFSLVLTAIGCALMYLFKA), 359-379 (IFAASLGILGFGLGGNATIFM), 381-401 (VALSGLSSEVAGSGTGTYGLF), 406-426 (APFGVAVFVPMFANGVTANIA), and 444-464 (ISSIQTLTLVELGCIVVGIIL).

Belongs to the major facilitator superfamily.

The protein resides in the cell membrane. The protein operates within lipid metabolism; bile acid degradation. This is Bile acid transporter (baiG) from Clostridium scindens (strain JCM 10418 / VPI 12708).